The primary structure comprises 299 residues: MGFVKVVKNKQYFKRYQVKFKRRREGKTDYYARKRLVVQDKNKYNTPKYRLIVRLSNKDVTCQVAYSRIEGDHIVCAAYSHELPRYGVKVGLTNYAAAYSTGLLLARRLLQRLGLDTLYTGTTDVTGDEYNVEPVDNGPGAFRCYLDVGLARTTTGRRVFGAMKGAVDGGLNVPHSIKRFPGYDAESKKFNAEVHRAHIFGLHVAEYMRSLEQDDEDSFKRQFSKYIKLGVTADAIEAIYKKAHEAIRADPSHKKKELKKDSVKQKRWNKRKLTLAERKNRIKQKKASFIKRLQAQAEA.

It belongs to the universal ribosomal protein uL18 family. As to quaternary structure, component of the large ribosomal subunit (LSU).

The protein resides in the cytoplasm. Its subcellular location is the nucleus. In terms of biological role, component of the ribosome, a large ribonucleoprotein complex responsible for the synthesis of proteins in the cell. The small ribosomal subunit (SSU) binds messenger RNAs (mRNAs) and translates the encoded message by selecting cognate aminoacyl-transfer RNA (tRNA) molecules. The large subunit (LSU) contains the ribosomal catalytic site termed the peptidyl transferase center (PTC), which catalyzes the formation of peptide bonds, thereby polymerizing the amino acids delivered by tRNAs into a polypeptide chain. The nascent polypeptides leave the ribosome through a tunnel in the LSU and interact with protein factors that function in enzymatic processing, targeting, and the membrane insertion of nascent chains at the exit of the ribosomal tunnel. The polypeptide is Large ribosomal subunit protein uL18 (RpL5) (Bombyx mori (Silk moth)).